The chain runs to 281 residues: Pantothenate synthetase (281 aa).

Position 30–37 (30–37) interacts with ATP; it reads MGYLHEGH. H37 acts as the Proton donor in catalysis. Q61 contacts (R)-pantoate. Q61 contributes to the beta-alanine binding site. 147-150 is a binding site for ATP; the sequence is GEKD. Residue Q153 participates in (R)-pantoate binding. ATP contacts are provided by residues I176 and 184-187; that span reads KSSR.

This sequence belongs to the pantothenate synthetase family. In terms of assembly, homodimer.

It localises to the cytoplasm. It carries out the reaction (R)-pantoate + beta-alanine + ATP = (R)-pantothenate + AMP + diphosphate + H(+). It participates in cofactor biosynthesis; (R)-pantothenate biosynthesis; (R)-pantothenate from (R)-pantoate and beta-alanine: step 1/1. Functionally, catalyzes the condensation of pantoate with beta-alanine in an ATP-dependent reaction via a pantoyl-adenylate intermediate. This Clostridium botulinum (strain 657 / Type Ba4) protein is Pantothenate synthetase.